The sequence spans 868 residues: DNA mismatch repair protein MutS (868 aa).

620-627 (GPNMGGKS) serves as a coordination point for ATP.

This sequence belongs to the DNA mismatch repair MutS family.

Functionally, this protein is involved in the repair of mismatches in DNA. It is possible that it carries out the mismatch recognition step. This protein has a weak ATPase activity. The protein is DNA mismatch repair protein MutS of Xylella fastidiosa (strain Temecula1 / ATCC 700964).